A 316-amino-acid chain; its full sequence is Methionyl-tRNA formyltransferase (316 aa).

112–115 contributes to the (6S)-5,6,7,8-tetrahydrofolate binding site; sequence SLLP.

Belongs to the Fmt family.

It carries out the reaction L-methionyl-tRNA(fMet) + (6R)-10-formyltetrahydrofolate = N-formyl-L-methionyl-tRNA(fMet) + (6S)-5,6,7,8-tetrahydrofolate + H(+). In terms of biological role, attaches a formyl group to the free amino group of methionyl-tRNA(fMet). The formyl group appears to play a dual role in the initiator identity of N-formylmethionyl-tRNA by promoting its recognition by IF2 and preventing the misappropriation of this tRNA by the elongation apparatus. This is Methionyl-tRNA formyltransferase from Flavobacterium psychrophilum (strain ATCC 49511 / DSM 21280 / CIP 103535 / JIP02/86).